The sequence spans 501 residues: MAAAALLLLAAAAAAVVVAMALRWLLLLGGPAAGRLGKRARMPPGSTGLPLIGETLRLISAYKTPNPEPFIDERVARHGGVFTTHVFGERTVFSADPAFNRLLLAAEGRAVHSSYPSSIATLLGARSLLLTRGAAHKRLHSLTLTRLGRPASPPLLAHIDRLVLATMRQWEPAATVRLMDEAKKITFNLTVKQLVSIEPGPWTESLRREYVKLIDGFFSIPFPLAYFLPFTTYGQALKARKKVAGALREVIKKRMEEKAENGGSIGDDEGKKEKKDMVEELLQAEGGSFSEEEMVDFCLSLLVAGYETTSVLMTLAVKFLTETPAALAELKEEHANIRDMKGKNQPLEWSDYKSMPFTQCVINETLRVGNIISGVFRRANTDIHYKDYTIPKGCKIFASFRAVHLNNEHYENARTFNPWRWQINNKLQNAVGANIFTPFGGGPRLCPGYELARVVVSIFLHHLVTRFSWEETEEDRLVFFPTTRTLKGYPINLRLLSESIC.

Residues 2–22 (AAAALLLLAAAAAAVVVAMAL) traverse the membrane as a helical segment. Cys-446 is a binding site for heme.

This sequence belongs to the cytochrome P450 family. Requires heme as cofactor. In terms of tissue distribution, highly expressed in shoot apex and inflorenscence. Expressed in roots, stems, leaf blades and leaf sheaths.

Its subcellular location is the cell membrane. Its pathway is plant hormone biosynthesis; brassinosteroid biosynthesis. Functionally, catalyzes the C23-alpha-hydroxylation step in brassinosteroid biosynthesis. Converts 6-deoxocathasterone to 6-deoxoteasterone in the late C6-oxidation pathway and cathasterone to teasterone (TE) in the early C6-oxidation pathway of brassinolide (BL) biosynthesis. The protein is Cytochrome P450 90A4 of Oryza sativa subsp. japonica (Rice).